Here is a 288-residue protein sequence, read N- to C-terminus: Bifunctional protein FolD (288 aa).

NADP(+) contacts are provided by residues glycine 166 to serine 168 and isoleucine 232.

Belongs to the tetrahydrofolate dehydrogenase/cyclohydrolase family. As to quaternary structure, homodimer.

The enzyme catalyses (6R)-5,10-methylene-5,6,7,8-tetrahydrofolate + NADP(+) = (6R)-5,10-methenyltetrahydrofolate + NADPH. The catalysed reaction is (6R)-5,10-methenyltetrahydrofolate + H2O = (6R)-10-formyltetrahydrofolate + H(+). It participates in one-carbon metabolism; tetrahydrofolate interconversion. Its function is as follows. Catalyzes the oxidation of 5,10-methylenetetrahydrofolate to 5,10-methenyltetrahydrofolate and then the hydrolysis of 5,10-methenyltetrahydrofolate to 10-formyltetrahydrofolate. The chain is Bifunctional protein FolD from Escherichia coli (strain UTI89 / UPEC).